The chain runs to 332 residues: Putative symporter YfeH (332 aa).

This sequence belongs to the bile acid:sodium symporter (BASS) (TC 2.A.28) family.

This is Putative symporter YfeH (yfeH) from Escherichia coli (strain K12).